The sequence spans 70 residues: Beta-defensin 43 (70 aa).

Residues 1 to 22 (MRLLLSILGVLTLLSILPLARS) form the signal peptide. Cystine bridges form between C29–C57 and C36–C50.

This sequence belongs to the beta-defensin family.

Its subcellular location is the secreted. In terms of biological role, has bactericidal activity. The chain is Beta-defensin 43 (Defb43) from Rattus norvegicus (Rat).